The sequence spans 243 residues: uncharacterized protein (243 aa).

This is an uncharacterized protein from Acanthamoeba polyphaga (Amoeba).